Reading from the N-terminus, the 93-residue chain is Small ribosomal subunit protein uS19c (93 aa).

This sequence belongs to the universal ribosomal protein uS19 family.

It localises to the plastid. Its subcellular location is the chloroplast. In terms of biological role, protein S19 forms a complex with S13 that binds strongly to the 16S ribosomal RNA. This chain is Small ribosomal subunit protein uS19c, found in Zygnema circumcarinatum (Green alga).